The primary structure comprises 429 residues: Septin-11 (429 aa).

A2 carries the N-acetylalanine modification. S9 carries the phosphoserine modification. A Septin-type G domain is found at 38-304 (QGFCFNILCV…ELYRRCKLEE (267 aa)). The interval 48–55 (GETGIGKS) is G1 motif. Residues 48-55 (GETGIGKS), G103, 184-192 (KADTIAKNE), G238, and R253 each bind GTP. The G3 motif stretch occupies residues 100-103 (DTVG). The segment at 183–186 (AKAD) is G4 motif. A coiled-coil region spans residues 320–415 (QETYEAKRNE…QSQAQQSGAQ (96 aa)). The disordered stretch occupies residues 398–429 (KKAAAQLLQSQAQQSGAQQTKKDKDKKNASFT). Residues 401 to 416 (AAQLLQSQAQQSGAQQ) are compositionally biased toward low complexity. The span at 417–429 (TKKDKDKKNASFT) shows a compositional bias: basic and acidic residues.

It belongs to the TRAFAC class TrmE-Era-EngA-EngB-Septin-like GTPase superfamily. Septin GTPase family. As to quaternary structure, septins polymerize into heterooligomeric protein complexes that form filaments, and can associate with cellular membranes, actin filaments and microtubules. Forms homooligomers. GTPase activity is required for filament formation. Interacts with SEPTIN7, SEPTIN9 and SEPTIN12. In terms of tissue distribution, widely expressed, except in leukocytes.

The protein resides in the cytoplasm. It is found in the cytoskeleton. Its subcellular location is the synapse. The protein localises to the cell projection. It localises to the dendritic spine. The protein resides in the axon. Filament-forming cytoskeletal GTPase. May play a role in cytokinesis (Potential). May play a role in the cytoarchitecture of neurons, including dendritic arborization and dendritic spines, and in GABAergic synaptic connectivity. During Listeria monocytogenes infection, not required for the bacterial entry process, but restricts its efficacy. The chain is Septin-11 from Homo sapiens (Human).